The primary structure comprises 284 residues: 4-hydroxybenzoate octaprenyltransferase (284 aa).

Helical transmembrane passes span 19–39, 42–62, 85–105, 107–127, 134–154, 165–185, 211–231, 233–253, and 261–281; these read IPIL…SHGL, ISYL…GCII, GQLS…VAFI, VLFL…LAIL, FFAI…FMAF, AWIF…IYAL, ILLF…YCDF, SFFY…YFLY, and CINA…IAVI.

Belongs to the UbiA prenyltransferase family. It depends on Mg(2+) as a cofactor.

It localises to the cell inner membrane. It catalyses the reaction all-trans-octaprenyl diphosphate + 4-hydroxybenzoate = 4-hydroxy-3-(all-trans-octaprenyl)benzoate + diphosphate. The protein operates within cofactor biosynthesis; ubiquinone biosynthesis. Functionally, catalyzes the prenylation of para-hydroxybenzoate (PHB) with an all-trans polyprenyl group. Mediates the second step in the final reaction sequence of ubiquinone-8 (UQ-8) biosynthesis, which is the condensation of the polyisoprenoid side chain with PHB, generating the first membrane-bound Q intermediate 3-octaprenyl-4-hydroxybenzoate. The polypeptide is 4-hydroxybenzoate octaprenyltransferase (Francisella tularensis subsp. holarctica (strain LVS)).